The primary structure comprises 371 residues: Trans-enoyl reductase mycC (371 aa).

51–54 (CDWK) is an NADP(+) binding site. Residue 140 to 147 (CVVGTVGL) participates in substrate binding. NADP(+) contacts are provided by residues 182–185 (STAS), 205–208 (SPAN), Y223, and 270–271 (FE). A substrate-binding site is contributed by 291 to 295 (GIRLL). 361 to 362 (VS) is an NADP(+) binding site.

This sequence belongs to the zinc-containing alcohol dehydrogenase family. As to quaternary structure, monomer.

The catalysed reaction is L-leucine + 8 malonyl-CoA + 4 S-adenosyl-L-methionine + ATP + 9 NADPH + 12 H(+) = (5S)-5-(2-methylpropyl)-3-[(2E,6R,8E,10E,12E)-6,8,10,12-tetramethyltetradeca-2,8,10,12-tetraenoyl]-2,5-dihydro-1H-pyrrol-2-one + AMP + 4 S-adenosyl-L-homocysteine + 8 CO2 + diphosphate + 9 NADP(+) + 8 CoA + 7 H2O. It participates in mycotoxin biosynthesis. In terms of biological role, trans-enoyl reductase; part of the gene cluster that mediates the biosynthesis of myceliothermophins, mycotoxins that contain a trans-fused decalin ring system connected to a conjugated 3-pyrrolin-2-one moiety and that have potential anti-tumor properties. The polyketide synthase module (PKS) of the PKS-NRPS mycA is responsible for the synthesis of the octaketide backbone. The downstream nonribosomal peptide synthetase (NRPS) module then amidates the carboxyl end of the octaketide with a leucine. A reductase-like domain (R) at the C-terminus catalyzes the reductive release of the polyketide-amino acid intermediate. Because mycA lacks a designated enoylreductase (ER) domain, the required activity is provided the enoyl reductase mycC. Following mycA-catalyzed construction and release of aminoacyl polyketide aldehyde, Knoevenagel condensation yields the expected ketone. This C18 keto acyclic precursor is the substrate of the Diels-Alderase mycB, that catalyzes the Diels-Alder cycloaddition to produce myceliothermophin E. A yet unknown oxygenase involved in the production of myceliothermophin A, via substitution with a hydroxyl group at the C21, has still to be identified. In Thermothelomyces thermophilus (strain ATCC 42464 / BCRC 31852 / DSM 1799) (Sporotrichum thermophile), this protein is Trans-enoyl reductase mycC.